The chain runs to 253 residues: Cell division protein ZapD (253 aa).

The protein belongs to the ZapD family. As to quaternary structure, interacts with FtsZ.

Its subcellular location is the cytoplasm. Functionally, cell division factor that enhances FtsZ-ring assembly. Directly interacts with FtsZ and promotes bundling of FtsZ protofilaments, with a reduction in FtsZ GTPase activity. This is Cell division protein ZapD from Bordetella bronchiseptica (strain ATCC BAA-588 / NCTC 13252 / RB50) (Alcaligenes bronchisepticus).